A 115-amino-acid polypeptide reads, in one-letter code: Peptidyl-tRNA hydrolase (115 aa).

It belongs to the PTH2 family.

Its subcellular location is the cytoplasm. It carries out the reaction an N-acyl-L-alpha-aminoacyl-tRNA + H2O = an N-acyl-L-amino acid + a tRNA + H(+). In terms of biological role, the natural substrate for this enzyme may be peptidyl-tRNAs which drop off the ribosome during protein synthesis. In Archaeoglobus fulgidus (strain ATCC 49558 / DSM 4304 / JCM 9628 / NBRC 100126 / VC-16), this protein is Peptidyl-tRNA hydrolase.